The chain runs to 250 residues: PTB-containing, cubilin and LRP1-interacting protein (250 aa).

The region spanning 93–250 (VTYLGKVSTT…VSQELESDDG (158 aa)) is the PID domain. The segment at 229 to 250 (DGRIHSNSSSEEVSQELESDDG) is disordered. Ser-236 and Ser-247 each carry phosphoserine. Over residues 241–250 (VSQELESDDG) the composition is skewed to acidic residues.

In terms of assembly, found in a complex with PID1/PCLI1, LRP1 and CUBNI. Interacts with LRP1 and CUBN. As to expression, expressed in subcutaneous fat, heart, skeletal muscle, brain, colon, thymus, spleen, kidney, liver, small intestine, placenta, lung and peripheral blood leukocyte.

Its subcellular location is the cytoplasm. Its function is as follows. Increases proliferation of preadipocytes without affecting adipocytic differentiation. This chain is PTB-containing, cubilin and LRP1-interacting protein (PID1), found in Homo sapiens (Human).